The following is a 260-amino-acid chain: Repetitive secreted protein 1 (260 aa).

Residues 1–20 (MKLSFTIVATAALVASCTFA) form the signal peptide.

Post-translationally, rsp1 is processed by the subtilisin-like endoprotease kex2. Cleavage by kex2 generates 11 peptides.

It localises to the secreted. In terms of biological role, repetitive secreted protein essential for pathogenic development. Hum3 and rsp1 together are pathogenicity proteins that share an essential function in early stages of the infection. This Mycosarcoma maydis (Corn smut fungus) protein is Repetitive secreted protein 1.